The sequence spans 343 residues: MDIILATGGTGGHIFPAIALAKALKTQGYNCILFTDKKTNKNTDIESYTLPLRRPSSNKFKFFLFLIYSSMLALYQVRKLKPKSVIGFGSYASFPTLLAARVLSIPIILHEQNTVLGRVNRFFFKSAKLIATSFPETKYAEGNKCIFTGNFVDIKAQSHSSTEKILNILVIAGSQGANFFDDVVSSVICDLPIKMKKKIRVTQQCTKKNVNKVKSLYKSEKIDCELSEFFDDMENRLANAHLVISRAGATSIAEITLARRSAIYIPYPYSKDNHQFYNAKYIEDSRAAIIVKQNSEAKKNLTEVLFDLLNNSQKLRDMTNSTEKTGIKNGTTEFVKVIVHRFS.

Residues T10–G12, N113, S174, and Q275 each bind UDP-N-acetyl-alpha-D-glucosamine.

Belongs to the glycosyltransferase 28 family. MurG subfamily.

It is found in the cell membrane. The enzyme catalyses di-trans,octa-cis-undecaprenyl diphospho-N-acetyl-alpha-D-muramoyl-L-alanyl-D-glutamyl-meso-2,6-diaminopimeloyl-D-alanyl-D-alanine + UDP-N-acetyl-alpha-D-glucosamine = di-trans,octa-cis-undecaprenyl diphospho-[N-acetyl-alpha-D-glucosaminyl-(1-&gt;4)]-N-acetyl-alpha-D-muramoyl-L-alanyl-D-glutamyl-meso-2,6-diaminopimeloyl-D-alanyl-D-alanine + UDP + H(+). It functions in the pathway cell wall biogenesis; peptidoglycan biosynthesis. Its function is as follows. Cell wall formation. Catalyzes the transfer of a GlcNAc subunit on undecaprenyl-pyrophosphoryl-MurNAc-pentapeptide (lipid intermediate I) to form undecaprenyl-pyrophosphoryl-MurNAc-(pentapeptide)GlcNAc (lipid intermediate II). This is UDP-N-acetylglucosamine--N-acetylmuramyl-(pentapeptide) pyrophosphoryl-undecaprenol N-acetylglucosamine transferase from Wolbachia sp. subsp. Drosophila simulans (strain wRi).